The chain runs to 779 residues: Guanyl-specific ribonuclease pgl-1 (779 aa).

An involved in dimerization region spans residues 203 to 464; the sequence is KLLLEGVKEQ…KRIIDALEKS (262 aa). Histidine 453 functions as the Proton acceptor in the catalytic mechanism. Disordered regions lie at residues 563–596, 611–661, and 718–779; these read HEPQ…PTKS, RDAL…GDAT, and GRGG…GGNF. Residues 584 to 595 are compositionally biased toward polar residues; it reads SISTDGWDSPTK. Positions 612–626 are enriched in basic and acidic residues; it reads DALKPDSVNSHRSEE. Residues 699–772 are RNA-binding RGG-box; sequence GGGGGSYGGR…GGDRGGRGGY (74 aa).

Homodimer. Interacts with pgl-2 and pgl-3; this association is not required for P-granule localization of either pgl-2 or pgl-3. Interacts with ife-1. Interacts with prmt-1; the interaction is direct. Interacts with nmad-1. Interacts with P granule components meg-1, meg-3 and meg-4. Does not require metal ions for catalytic activity. is required as a cofactor.

It localises to the cytoplasmic granule. It catalyses the reaction [RNA] containing guanosine + H2O = an [RNA fragment]-3'-guanosine-3'-phosphate + a 5'-hydroxy-ribonucleotide-3'-[RNA fragment].. In terms of biological role, guanyl-specific endoribonuclease which cleaves the phosphodiester bond in single-stranded RNA between the 3'-guanylic residue and the 5'-OH residue of adjacent nucleotide, resulting in the formation of a corresponding 2',3'-cyclic phosphate intermediate. Essential role in male and female postembryonic germline development; maternally provided protein maintains a population of proliferating germ cells and zygotic expression is required for correct oogenesis. Together with the P-granule component pgl-3, is involved in the formation of P-granules. Together with pgl-3, probably recruits other granule components such as pos-1, mex-3 and glh-1 to P-granules. In addition, may act redundantly with pgl-3 to protect germ cells from excessive germline apoptosis during normal oogenesis and development of the two gonadal arms. This may in part be through regulating the localization of sir-2.1 which is involved in germ cell apoptosis. May protect somatic cells from excessive apoptosis during normal development. The polypeptide is Guanyl-specific ribonuclease pgl-1 (Caenorhabditis remanei (Caenorhabditis vulgaris)).